We begin with the raw amino-acid sequence, 753 residues long: Protein transport protein SEC23-1 (753 aa).

Residues cysteine 56, cysteine 61, cysteine 80, and cysteine 83 each contribute to the Zn(2+) site.

This sequence belongs to the SEC23/SEC24 family. SEC23 subfamily. The COPII coat is composed of at least 5 proteins: the SEC23/24 complex, the SEC13/31 complex, and the protein SAR1.

The protein localises to the cytoplasm. It localises to the cytoplasmic vesicle. Its subcellular location is the COPII-coated vesicle membrane. It is found in the endoplasmic reticulum membrane. The protein resides in the golgi apparatus membrane. Functionally, component of the coat protein complex II (COPII) which promotes the formation of transport vesicles from the endoplasmic reticulum (ER). The coat has two main functions, the physical deformation of the endoplasmic reticulum membrane into vesicles and the selection of cargo molecules. The polypeptide is Protein transport protein SEC23-1 (SEC231) (Candida glabrata (strain ATCC 2001 / BCRC 20586 / JCM 3761 / NBRC 0622 / NRRL Y-65 / CBS 138) (Yeast)).